Consider the following 667-residue polypeptide: Tripartite terminase subunit 3 (667 aa).

Residues 208-215 (VPRRHGKT) carry the Walker A motif motif. A Walker B motif motif is present at residues 301 to 306 (LLIVDE). Glutamate 306 acts as the For ATPase activity in catalysis. Catalysis depends on for nuclease activity residues aspartate 459, glutamate 530, and aspartate 644.

It belongs to the herpesviridae TRM3 protein family. As to quaternary structure, interacts with the terminase subunits TRM1 and TRM2. Interacts with portal protein.

It localises to the host nucleus. Its function is as follows. Component of the molecular motor that translocates viral genomic DNA in empty capsid during DNA packaging. Forms a tripartite terminase complex together with TRM1 and TRM2 in the host cytoplasm. Once the complex reaches the host nucleus, it interacts with the capsid portal vertex. This portal forms a ring in which genomic DNA is translocated into the capsid. TRM3 carries an RNase H-like nuclease activity that plays an important role for the cleavage of concatemeric viral DNA into unit length genomes. This chain is Tripartite terminase subunit 3, found in Human herpesvirus 6A (strain Uganda-1102) (HHV-6 variant A).